We begin with the raw amino-acid sequence, 449 residues long: UDP-N-acetylglucosamine 1-carboxyvinyltransferase (449 aa).

Over residues 1-12 the composition is skewed to basic and acidic residues; the sequence is MQVTVNEHDAVE. Residues 1–30 are disordered; that stretch reads MQVTVNEHDAVERVATATPAGNREAHAHGT. Phosphoenolpyruvate is bound at residue 51-52; the sequence is KN. Arginine 121 provides a ligand contact to UDP-N-acetyl-alpha-D-glucosamine. Cysteine 145 serves as the catalytic Proton donor. Cysteine 145 bears the 2-(S-cysteinyl)pyruvic acid O-phosphothioketal mark. UDP-N-acetyl-alpha-D-glucosamine contacts are provided by residues 150-154, aspartate 333, and isoleucine 355; that span reads RPVDQ.

It belongs to the EPSP synthase family. MurA subfamily.

It is found in the cytoplasm. It carries out the reaction phosphoenolpyruvate + UDP-N-acetyl-alpha-D-glucosamine = UDP-N-acetyl-3-O-(1-carboxyvinyl)-alpha-D-glucosamine + phosphate. It participates in cell wall biogenesis; peptidoglycan biosynthesis. Its function is as follows. Cell wall formation. Adds enolpyruvyl to UDP-N-acetylglucosamine. The protein is UDP-N-acetylglucosamine 1-carboxyvinyltransferase of Burkholderia pseudomallei (strain 1710b).